The sequence spans 710 residues: Probable threonine--tRNA ligase 1, cytoplasmic (710 aa).

The interval Met1–Val35 is disordered. The span at Pro18 to Pro33 shows a compositional bias: basic and acidic residues. Residues Lys72–Lys137 form the TGS domain.

It belongs to the class-II aminoacyl-tRNA synthetase family.

It localises to the cytoplasm. The catalysed reaction is tRNA(Thr) + L-threonine + ATP = L-threonyl-tRNA(Thr) + AMP + diphosphate + H(+). The chain is Probable threonine--tRNA ligase 1, cytoplasmic (thrS1) from Dictyostelium discoideum (Social amoeba).